The following is a 608-amino-acid chain: Phosphogluconate dehydratase (608 aa).

[4Fe-4S] cluster-binding residues include C154 and C221.

The protein belongs to the IlvD/Edd family. [4Fe-4S] cluster is required as a cofactor.

It catalyses the reaction 6-phospho-D-gluconate = 2-dehydro-3-deoxy-6-phospho-D-gluconate + H2O. Its pathway is carbohydrate metabolism; Entner-Doudoroff pathway. Functionally, catalyzes the dehydration of 6-phospho-D-gluconate to 2-dehydro-3-deoxy-6-phospho-D-gluconate. In Helicobacter pylori (strain J99 / ATCC 700824) (Campylobacter pylori J99), this protein is Phosphogluconate dehydratase.